Consider the following 144-residue polypeptide: Ribonuclease VapC1 (144 aa).

The PINc domain occupies 6-132; sequence VFVDGNVIVD…SFYSPDIEVL (127 aa). D9 and D102 together coordinate Mg(2+).

It belongs to the PINc/VapC protein family. Requires Mg(2+) as cofactor.

Functionally, toxic component of a type II toxin-antitoxin (TA) system. An RNase. The sequence is that of Ribonuclease VapC1 from Aquifex aeolicus (strain VF5).